The sequence spans 417 residues: Putative plant UBX domain-containing protein 14 (417 aa).

One can recognise a UBX domain in the interval 335–415 (DRSVVCSICV…GIANSMISVT (81 aa)).

This chain is Putative plant UBX domain-containing protein 14, found in Arabidopsis thaliana (Mouse-ear cress).